A 722-amino-acid polypeptide reads, in one-letter code: MAR-binding filament-like protein 1-1 (722 aa).

Residues M1 to S20 are disordered. Residues M1–H50 constitute a chloroplast transit peptide. Residues S51–E84 constitute a thylakoid transit peptide. Residues G85–P112 are Lumenal, thylakoid-facing. The helical transmembrane segment at F113 to A133 threads the bilayer. The Stromal segment spans residues L134–S722. The stretch at I146 to Q679 forms a coiled coil. The disordered stretch occupies residues V687–S722. Residues R705–A712 carry the Nuclear localization signal motif.

As to quaternary structure, interacts with PTST2; the interaction is essential for the initiation of starch granules biosynthesis in leaf chloroplasts, for the correct location of the process in the stromal spaces between the thylakoid membranes, and for the association of PTST2 with the thylakoid membranes. In terms of processing, predicted to be translocated into the thylakoid by the Tat system.

It is found in the plastid. The protein resides in the chloroplast. Its subcellular location is the chloroplast thylakoid membrane. The protein localises to the chloroplast stroma. It localises to the chloroplast nucleoid. It is found in the nucleus. The protein resides in the nucleus matrix. In terms of biological role, required for the initiation of starch granules biosynthesis in leaf chloroplasts. Anchored to the thylakoid membranes with its C-terminus facing into the stroma where it is essential for localizing PTST2 and SS4 to the stromal spaces between the thylakoid membranes in order to begin starch granule formation. Associated with leaf chloroplastic nucleoids in vivo. Binds to various chloroplastic double-stranded DNA fragments without particular sequence specificity in vitro. May function at the interface between nucleoids and thylakoids possibly by anchoring nucleoids to the thylakoid membrane system in mature chloroplasts. Likely to participate in nuclear architecture by connecting chromatin with the nuclear matrix and potentially with the nuclear envelope. In Nicotiana tabacum (Common tobacco), this protein is MAR-binding filament-like protein 1-1.